The chain runs to 397 residues: 4-O-methyl-glucuronoyl methylesterase (397 aa).

Residues 1–18 (MVHLTSALLVAGAAFAAA) form the signal peptide. Cystine bridges form between Cys-31–Cys-65, Cys-212–Cys-347, and Cys-244–Cys-319. The short motif at 211-216 (GCSRNG) is the GXSYXG catalytic site motif element. The Nucleophile role is filled by Ser-213. Substrate is bound by residues Lys-217, Gln-259, Glu-267, and Trp-310. Catalysis depends on His-346, which acts as the Proton donor/acceptor.

It belongs to the carbohydrate esterase 15 (CE15) family.

Its subcellular location is the secreted. It carries out the reaction a 4-O-methyl-alpha-D-glucuronosyl ester derivative + H2O = 4-O-methyl-alpha-D-glucuronate derivative + an alcohol + H(+). Functionally, glucuronoyl esterase which may play a significant role in biomass degradation, as it is considered to disconnect hemicellulose from lignin through the hydrolysis of the ester bond between 4-O-methyl-D-glucuronic acid residues of glucuronoxylans and aromatic alcohols of lignin. The protein is 4-O-methyl-glucuronoyl methylesterase (ge2) of Thermothelomyces thermophilus (strain ATCC 42464 / BCRC 31852 / DSM 1799) (Sporotrichum thermophile).